The sequence spans 487 residues: 1-aminocyclopropane-1-carboxylate synthase 1 (487 aa).

K286 is modified (N6-(pyridoxal phosphate)lysine).

This sequence belongs to the class-I pyridoxal-phosphate-dependent aminotransferase family. As to quaternary structure, homodimer. It depends on pyridoxal 5'-phosphate as a cofactor.

The catalysed reaction is S-adenosyl-L-methionine = 1-aminocyclopropane-1-carboxylate + S-methyl-5'-thioadenosine + H(+). The protein operates within alkene biosynthesis; ethylene biosynthesis via S-adenosyl-L-methionine; ethylene from S-adenosyl-L-methionine: step 1/2. Functionally, catalyzes the formation of 1-aminocyclopropane-1-carboxylate, a direct precursor of ethylene in higher plants. This Oryza sativa subsp. indica (Rice) protein is 1-aminocyclopropane-1-carboxylate synthase 1 (ACC1).